Reading from the N-terminus, the 432-residue chain is Adenylosuccinate synthetase (432 aa).

GTP is bound by residues glycine 13 to lysine 19 and glycine 41 to threonine 43. Aspartate 14 functions as the Proton acceptor in the catalytic mechanism. The Mg(2+) site is built by aspartate 14 and glycine 41. IMP contacts are provided by residues aspartate 14 to lysine 17, asparagine 39 to histidine 42, threonine 130, arginine 144, glutamine 225, threonine 240, and arginine 304. Histidine 42 functions as the Proton donor in the catalytic mechanism. Alanine 300–arginine 306 contributes to the substrate binding site. GTP is bound by residues arginine 306, lysine 332–aspartate 334, and serine 415–glycine 417.

The protein belongs to the adenylosuccinate synthetase family. As to quaternary structure, homodimer. It depends on Mg(2+) as a cofactor.

The protein resides in the cytoplasm. The enzyme catalyses IMP + L-aspartate + GTP = N(6)-(1,2-dicarboxyethyl)-AMP + GDP + phosphate + 2 H(+). It participates in purine metabolism; AMP biosynthesis via de novo pathway; AMP from IMP: step 1/2. Functionally, plays an important role in the de novo pathway of purine nucleotide biosynthesis. Catalyzes the first committed step in the biosynthesis of AMP from IMP. This chain is Adenylosuccinate synthetase, found in Pectobacterium atrosepticum (strain SCRI 1043 / ATCC BAA-672) (Erwinia carotovora subsp. atroseptica).